We begin with the raw amino-acid sequence, 256 residues long: 5-oxoprolinase subunit A 3 (256 aa).

It belongs to the LamB/PxpA family. Forms a complex composed of PxpA, PxpB and PxpC.

The catalysed reaction is 5-oxo-L-proline + ATP + 2 H2O = L-glutamate + ADP + phosphate + H(+). Catalyzes the cleavage of 5-oxoproline to form L-glutamate coupled to the hydrolysis of ATP to ADP and inorganic phosphate. In Pseudomonas syringae pv. tomato (strain ATCC BAA-871 / DC3000), this protein is 5-oxoprolinase subunit A 3.